Consider the following 187-residue polypeptide: UPF0340 protein stu1894 (187 aa).

It belongs to the UPF0340 family.

The chain is UPF0340 protein stu1894 from Streptococcus thermophilus (strain ATCC BAA-250 / LMG 18311).